Consider the following 368-residue polypeptide: DNA replication and repair protein RecF (368 aa).

30–37 (GNNAQGKT) is a binding site for ATP.

The protein belongs to the RecF family.

The protein resides in the cytoplasm. Functionally, the RecF protein is involved in DNA metabolism; it is required for DNA replication and normal SOS inducibility. RecF binds preferentially to single-stranded, linear DNA. It also seems to bind ATP. The polypeptide is DNA replication and repair protein RecF (Streptococcus pyogenes serotype M12 (strain MGAS2096)).